The following is a 362-amino-acid chain: DNA replication and repair protein RecF (362 aa).

Residue 30-37 (GPNGSGKT) coordinates ATP.

Belongs to the RecF family.

Its subcellular location is the cytoplasm. The RecF protein is involved in DNA metabolism; it is required for DNA replication and normal SOS inducibility. RecF binds preferentially to single-stranded, linear DNA. It also seems to bind ATP. The sequence is that of DNA replication and repair protein RecF from Proteus mirabilis (strain HI4320).